Reading from the N-terminus, the 84-residue chain is Translational regulator CsrA (84 aa).

The protein belongs to the CsrA/RsmA family. Homodimer; the beta-strands of each monomer intercalate to form a hydrophobic core, while the alpha-helices form wings that extend away from the core.

It is found in the cytoplasm. In terms of biological role, a translational regulator that binds mRNA to regulate translation initiation and/or mRNA stability. Usually binds in the 5'-UTR at or near the Shine-Dalgarno sequence preventing ribosome-binding, thus repressing translation. Its main target seems to be the major flagellin gene, while its function is anatagonized by FliW. The protein is Translational regulator CsrA of Leptospira borgpetersenii serovar Hardjo-bovis (strain JB197).